The chain runs to 125 residues: Large ribosomal subunit protein bL12 (125 aa).

This sequence belongs to the bacterial ribosomal protein bL12 family. Homodimer. Part of the ribosomal stalk of the 50S ribosomal subunit. Forms a multimeric L10(L12)X complex, where L10 forms an elongated spine to which 2 to 4 L12 dimers bind in a sequential fashion. Binds GTP-bound translation factors.

Forms part of the ribosomal stalk which helps the ribosome interact with GTP-bound translation factors. Is thus essential for accurate translation. The polypeptide is Large ribosomal subunit protein bL12 (Chelativorans sp. (strain BNC1)).